We begin with the raw amino-acid sequence, 27 residues long: Natriuretic peptides A (27 aa).

A disulfide bond links Cys-7 and Cys-23.

This sequence belongs to the natriuretic peptide family.

The protein localises to the secreted. In terms of biological role, hormone playing a key role in cardiovascular homeostasis through regulation of natriuresis, diuresis, and vasodilation. Has a cGMP-stimulating activity. This chain is Natriuretic peptides A (nppa), found in Anguilla japonica (Japanese eel).